We begin with the raw amino-acid sequence, 136 residues long: Large ribosomal subunit protein uL16 (136 aa).

This sequence belongs to the universal ribosomal protein uL16 family. As to quaternary structure, part of the 50S ribosomal subunit.

Binds 23S rRNA and is also seen to make contacts with the A and possibly P site tRNAs. This chain is Large ribosomal subunit protein uL16, found in Rickettsia canadensis (strain McKiel).